The sequence spans 75 residues: Toxin-like peptide AaF1CA7 (75 aa).

A signal peptide spans 1 to 22 (MMKLMLFSIIVILFSLIGSIHG). The LCN-type CS-alpha/beta domain maps to 25-75 (VPGNYPLDSSDDTYLCAPLGENPSCIQICRKHGVKYGYCYAFQCWCEYFGR). 3 cysteine pairs are disulfide-bonded: C40-C63, C49-C68, and C53-C70.

The protein belongs to the long (3 C-C) scorpion toxin superfamily. As to expression, expressed by the venom gland.

It localises to the secreted. Its function is as follows. Probable neurotoxin that inhibits ion channels. In Androctonus australis (Sahara scorpion), this protein is Toxin-like peptide AaF1CA7.